We begin with the raw amino-acid sequence, 252 residues long: 5'-nucleotidase SurE (252 aa).

Positions 8, 9, 39, and 95 each coordinate a divalent metal cation.

Belongs to the SurE nucleotidase family. Requires a divalent metal cation as cofactor.

It is found in the cytoplasm. The enzyme catalyses a ribonucleoside 5'-phosphate + H2O = a ribonucleoside + phosphate. In terms of biological role, nucleotidase that shows phosphatase activity on nucleoside 5'-monophosphates. The sequence is that of 5'-nucleotidase SurE from Clostridium botulinum (strain Kyoto / Type A2).